Reading from the N-terminus, the 803-residue chain is Volume-regulated anion channel subunit LRRC8C (803 aa).

Residues 1–22 (MIPVTEFRQFSEQQPAFRVLKP) are Cytoplasmic-facing. A helical transmembrane segment spans residues 23–47 (WWDVFTDYLSVAMLMIGVFGCTLQV). Residues 48-124 (MQDKIICLPK…CYERALHWYA (77 aa)) are Extracellular-facing. 2 cysteine pairs are disulfide-bonded: Cys54–Cys308 and Cys115–Cys293. Asn64 and Asn70 each carry an N-linked (GlcNAc...) asparagine glycan. A helical transmembrane segment spans residues 125–144 (KYFPYLVLIHTLVFMLCSNF). The Cytoplasmic portion of the chain corresponds to 145–262 (WFKFPGSSSK…EEGDILYAMY (118 aa)). A disordered region spans residues 177–209 (EVSGEDSEEKDNRKNNMNRSNTIQSGPEDSLVN). The span at 191-209 (NNMNRSNTIQSGPEDSLVN) shows a compositional bias: polar residues. 2 positions are modified to phosphoserine: Ser212 and Ser215. A helical membrane pass occupies residues 263 to 284 (VRQTVLKVIKFLIIIAYNSALV). Residues 285–314 (SKVQFTVDCNVDIQDMTGYKNFSCNHTMAH) lie on the Extracellular side of the membrane. The chain crosses the membrane as a helical span at residues 315–339 (LFSKLSFCYLCFVSIYGLTCLYTLY). Residues 340 to 803 (WLFYRSLREY…SDVREQMKTE (464 aa)) are Cytoplasmic-facing. 17 LRR repeats span residues 397 to 420 (ENKL…KLQT), 421 to 443 (NAHN…VFEI), 446 to 466 (LQSL…IAQL), 467 to 488 (DNLQ…ALSF), 490 to 513 (KENL…MYGL), 515 to 537 (NLEE…TLES), 541 to 563 (LKSL…VVDV), 565 to 587 (SHLQ…NLKK), 588 to 611 (MTNL…VFSL), 613 to 635 (SLQE…SFQH), 636 to 659 (LRKL…IKKL), 660 to 682 (TSLE…LFLC), 684 to 705 (KIRY…IGVL), 706 to 728 (QSLQ…LYFC), 730 to 751 (KLKT…IGNL), 753 to 774 (FLSY…LGDC), and 776 to 799 (ALKR…VREQ).

Belongs to the LRRC8 family. In terms of assembly, heterohexamer; oligomerizes with other LRRC8 proteins (LRRC8A, LRRC8B, LRRC8D and/or LRRC8E) to form a heterohexamer. Homoheptamer; inactive, likely because it is not targeted to the plasma membrane in the absence of LRRC8A. In vivo, the subunit composition may depend primarily on expression levels, and heterooligomeric channels containing various proportions of the different LRRC8 proteins may coexist. In terms of tissue distribution, expressed at highest levels in skeletal muscle, and at moderate levels in heart, lung and peripheral blood leukocytes.

The protein resides in the cell membrane. The protein localises to the endoplasmic reticulum membrane. The enzyme catalyses chloride(in) = chloride(out). The catalysed reaction is iodide(out) = iodide(in). It carries out the reaction taurine(out) = taurine(in). It catalyses the reaction 2',3'-cGAMP(out) = 2',3'-cGAMP(in). In terms of biological role, non-essential component of the volume-regulated anion channel (VRAC, also named VSOAC channel), an anion channel required to maintain a constant cell volume in response to extracellular or intracellular osmotic changes. The VRAC channel conducts iodide better than chloride and can also conduct organic osmolytes like taurine. Plays a redundant role in the efflux of amino acids, such as aspartate and glutamate, in response to osmotic stress. The VRAC channel also mediates transport of immunoreactive cyclic dinucleotide GMP-AMP (2'-3'-cGAMP), an immune messenger produced in response to DNA virus in the cytosol. Channel activity requires LRRC8A plus at least one other family member (LRRC8B, LRRC8C, LRRC8D or LRRC8E); channel characteristics depend on the precise subunit composition. The polypeptide is Volume-regulated anion channel subunit LRRC8C (Homo sapiens (Human)).